The primary structure comprises 135 residues: UPF0102 protein PGN_1801 (135 aa).

Belongs to the UPF0102 family.

This is UPF0102 protein PGN_1801 from Porphyromonas gingivalis (strain ATCC 33277 / DSM 20709 / CIP 103683 / JCM 12257 / NCTC 11834 / 2561).